The following is a 450-amino-acid chain: MSLRLSSASRRSCPRPTTGSLRLYGGGTSFGTGNSCGISGIGSGFSSAFGGSSSGGNTGGGNPCAGFTVNERGLLSGNEKVTMQNLNDRLASYLDSVHALEEANADLEQKIKGWYEKFGPGSCRGLDHDYSRYFPIIDDLKNQIIASTTSNANAVLQIDNARLTADDFRLKYENELALHQSVEADVNGLRRVLDEITLCRTDLEIQYETLSEEMTYLKKNHKEEMQVLQCAAGGNVNVEMNAAPGVDLTVLLNNMRAEYEALAEQNRRDAEAWFNEKSASLQQQISEDVGATTSARNELTEMKRTLQTLEIELQSLLATKHSLECSLTETESNYCAQLAQIQAQIGALEEQLHQVRTETEGQKLEYEQLLDIKLHLEKEIETYCLLIGGDDGACKSGGYKSKDYGSGNVGSQVKDPAKAIVVKKVLEEVDQRSKILTTRLHSLEEKSQSN.

Residues 1–11 (MSLRLSSASRR) are compositionally biased toward low complexity. The disordered stretch occupies residues 1-20 (MSLRLSSASRRSCPRPTTGS). The interval 1-78 (MSLRLSSASR…VNERGLLSGN (78 aa)) is head. Residues 79–114 (EKVTMQNLNDRLASYLDSVHALEEANADLEQKIKGW) are coil 1A. Positions 79–394 (EKVTMQNLND…LLIGGDDGAC (316 aa)) constitute an IF rod domain. The tract at residues 115-136 (YEKFGPGSCRGLDHDYSRYFPI) is linker 1. The coil 1B stretch occupies residues 137–228 (IDDLKNQIIA…KNHKEEMQVL (92 aa)). The linker 12 stretch occupies residues 229–251 (QCAAGGNVNVEMNAAPGVDLTVL). A coil 2 region spans residues 252-390 (LNNMRAEYEA…ETYCLLIGGD (139 aa)). Residues 391-450 (DGACKSGGYKSKDYGSGNVGSQVKDPAKAIVVKKVLEEVDQRSKILTTRLHSLEEKSQSN) form a tail region. A Phosphoserine modification is found at Ser-442.

It belongs to the intermediate filament family. Heterodimer of a type I and a type II keratin. Heterodimer with type II keratin KRT5 leading to the formation of keratin intermediate filament (KIF) network. Interacts with KRT6A to form filaments. As to expression, strongly expressed in skin and scalp, and weak expression observed in thymus and tongue. In the hair follicle, expressed in Henle layer, Huxley layer and in the inner root sheath cuticle of the hair follicle. Expression extends from the bulb region up to the point of differentiation into the three layers. Also present in the medulla of beard hair (at protein level).

It is found in the cytoplasm. In terms of biological role, essential for the proper assembly of type I and type II keratin protein complexes and formation of keratin intermediate filaments in the inner root sheath (irs). Plays a role in the cytoskeleton organization. The chain is Keratin, type I cytoskeletal 25 from Homo sapiens (Human).